The chain runs to 852 residues: Carbohydrate-responsive element-binding protein (852 aa).

The segment covering 1–12 (MAGALAGLAAGL) has biased composition (low complexity). Disordered stretches follow at residues 1–36 (MAGA…SLRR) and 54–80 (VSSP…FGPR). A phosphoserine mark is found at Ser-20, Ser-23, and Ser-25. Thr-27 carries the post-translational modification Phosphothreonine. A Phosphoserine modification is found at Ser-29. Ser-196 carries the phosphoserine modification. 3 disordered regions span residues 328-365 (DSLF…CPGP), 486-527 (PCFS…NNPC), and 548-648 (STLL…NKTE). The segment covering 505–521 (ASPPTLAPATASPPTTA) has biased composition (low complexity). Polar residues predominate over residues 548–559 (STLLRSPGSPQE). At Ser-556 the chain carries Phosphoserine; by AMPK. Positions 568-584 (FLPPTPAPTPPRPPPGP) are enriched in pro residues. Phosphoserine is present on residues Ser-602, Ser-614, and Ser-631. Residues 649 to 703 (NRRITHISAEQKRRFNIKLGFDTLHGLVSTLSAQPSLKVSKATTLQKTAEYILML) form the bHLH domain. A leucine-zipper region spans residues 703-724 (LQQERAGLQEEAQQLRDEIEEL).

In terms of assembly, binds DNA as a heterodimer with MLX/TCFL4. In terms of processing, phosphorylation at Ser-556 by AMPK inactivates the DNA-binding activity. In terms of tissue distribution, expressed in liver, heart, kidney, cerebellum and intestinal tissues.

Its subcellular location is the nucleus. Functionally, binds DNA as a heterodimer with MLX/TCFL4 and activates transcription. Binds to the canonical E box sequence 5'-CACGTG-3'. Plays a role in transcriptional activation of glycolytic target genes. Involved in glucose-responsive gene regulation. Regulates transcription in response to changes in cellular carbohydrate abundance such as occurs during fasting to feeding metabolic transition. Refeeding stimulates MLXIPL/ChREBP transcription factor, leading to increased BCKDK to PPM1K expression ratio, phosphorylation and activation of ACLY that ultimately results in the generation of malonyl-CoA and oxaloacetate immediate substrates of de novo lipogenesis and gluconeogenesis, respectively. The sequence is that of Carbohydrate-responsive element-binding protein (MLXIPL) from Homo sapiens (Human).